A 92-amino-acid chain; its full sequence is Serine protease inhibitor I/II (92 aa).

The N-terminal stretch at 1 to 19 (MKLALALCAAFLLVVLVQA) is a signal peptide. Pacifastin domains are found at residues 20 to 54 (EQEC…CPPH) and 57 to 92 (EVTC…CPQK). 6 disulfides stabilise this stretch: Cys-23/Cys-38, Cys-33/Cys-51, Cys-36/Cys-46, Cys-60/Cys-75, Cys-70/Cys-89, and Cys-73/Cys-84.

It belongs to the protease inhibitor I19 family. Expressed in hemolymph, ovaries, testes and fat body of adults but are absent in the gut. Also present in larval hemolymph and fat body.

It is found in the secreted. In terms of biological role, in vitro, is active against alpha-chymotrypsin and trypsin. In vitro, is active against alpha-chymotrypsin and pancreatic elastase. In Schistocerca gregaria (Desert locust), this protein is Serine protease inhibitor I/II.